Reading from the N-terminus, the 347-residue chain is 4-hydroxy-2-oxovalerate aldolase 1 (347 aa).

One can recognise a Pyruvate carboxyltransferase domain in the interval 11–263 (VVLHDMCLRD…ETGVDLFKLM (253 aa)). 19 to 20 (RD) contacts substrate. Asp20 serves as a coordination point for Mn(2+). His23 acts as the Proton acceptor in catalysis. Substrate contacts are provided by Ser173 and His202. Mn(2+) contacts are provided by His202 and His204. Tyr293 contributes to the substrate binding site.

It belongs to the 4-hydroxy-2-oxovalerate aldolase family.

The catalysed reaction is (S)-4-hydroxy-2-oxopentanoate = acetaldehyde + pyruvate. The sequence is that of 4-hydroxy-2-oxovalerate aldolase 1 (lapG) from Azoarcus sp. (strain BH72).